Here is a 184-residue protein sequence, read N- to C-terminus: Protein GrpE (184 aa).

Residues 1 to 26 show a composition bias toward polar residues; sequence MANEQNEQAQDIQNEQVEQSNEQTQA. A disordered region spans residues 1 to 34; the sequence is MANEQNEQAQDIQNEQVEQSNEQTQAEGVEQAND.

It belongs to the GrpE family. As to quaternary structure, homodimer.

The protein localises to the cytoplasm. Functionally, participates actively in the response to hyperosmotic and heat shock by preventing the aggregation of stress-denatured proteins, in association with DnaK and GrpE. It is the nucleotide exchange factor for DnaK and may function as a thermosensor. Unfolded proteins bind initially to DnaJ; upon interaction with the DnaJ-bound protein, DnaK hydrolyzes its bound ATP, resulting in the formation of a stable complex. GrpE releases ADP from DnaK; ATP binding to DnaK triggers the release of the substrate protein, thus completing the reaction cycle. Several rounds of ATP-dependent interactions between DnaJ, DnaK and GrpE are required for fully efficient folding. This is Protein GrpE from Acinetobacter baumannii (strain AB307-0294).